The chain runs to 195 residues: 2-hydroxychromene-2-carboxylate isomerase (195 aa).

Ser-13 acts as the Nucleophile in catalysis. Ser-13 contacts glutathione. Residues Lys-45 and 55–56 contribute to the substrate site; that span reads NR. 181-184 is a glutathione binding site; that stretch reads WGND.

Belongs to the GST superfamily. NadH family. The cofactor is glutathione.

It catalyses the reaction 2-hydroxychromene-2-carboxylate = (3E)-4-(2-hydroxyphenyl)-2-oxobut-3-enoate. Activated by salicylate. Involved in the naphthalene and naphthalenesulfonate catabolic pathway. Catalyzes the reversible glutathione-dependent isomerization of 2-hydroxychromene-2-carboxylate (HCCA) to trans-O-hydroxybenzylidenepyruvate (THBPA). It can also use 2-hydroxybenzo[g]chromene-2-carboxylate as substrate. This is 2-hydroxychromene-2-carboxylate isomerase (nsaD) from Sphingobium xenophagum.